The following is a 162-amino-acid chain: ATP synthase subunit b (162 aa).

A helical transmembrane segment spans residues 6–25 (TLFTLVTFLVLMLAVGKVAW).

Belongs to the ATPase B chain family. In terms of assembly, F-type ATPases have 2 components, F(1) - the catalytic core - and F(0) - the membrane proton channel. F(1) has five subunits: alpha(3), beta(3), gamma(1), delta(1), epsilon(1). F(0) has three main subunits: a(1), b(2) and c(10-14). The alpha and beta chains form an alternating ring which encloses part of the gamma chain. F(1) is attached to F(0) by a central stalk formed by the gamma and epsilon chains, while a peripheral stalk is formed by the delta and b chains.

Its subcellular location is the cell membrane. In terms of biological role, f(1)F(0) ATP synthase produces ATP from ADP in the presence of a proton or sodium gradient. F-type ATPases consist of two structural domains, F(1) containing the extramembraneous catalytic core and F(0) containing the membrane proton channel, linked together by a central stalk and a peripheral stalk. During catalysis, ATP synthesis in the catalytic domain of F(1) is coupled via a rotary mechanism of the central stalk subunits to proton translocation. Functionally, component of the F(0) channel, it forms part of the peripheral stalk, linking F(1) to F(0). The sequence is that of ATP synthase subunit b from Lacticaseibacillus paracasei (strain ATCC 334 / BCRC 17002 / CCUG 31169 / CIP 107868 / KCTC 3260 / NRRL B-441) (Lactobacillus paracasei).